The sequence spans 179 residues: Ribosome maturation factor RimM (179 aa).

The PRC barrel domain occupies 96 to 179 (DNEFYWVDLI…KITVDWGLDY (84 aa)).

The protein belongs to the RimM family. Binds ribosomal protein uS19.

The protein localises to the cytoplasm. Functionally, an accessory protein needed during the final step in the assembly of 30S ribosomal subunit, possibly for assembly of the head region. Essential for efficient processing of 16S rRNA. May be needed both before and after RbfA during the maturation of 16S rRNA. It has affinity for free ribosomal 30S subunits but not for 70S ribosomes. The protein is Ribosome maturation factor RimM of Janthinobacterium sp. (strain Marseille) (Minibacterium massiliensis).